Consider the following 318-residue polypeptide: ADP-L-glycero-D-manno-heptose-6-epimerase (318 aa).

NADP(+)-binding positions include 10 to 11 (FI), 31 to 32 (DD), Lys38, Lys53, and 79 to 83 (EGACS). The Proton acceptor role is filled by Tyr144. An NADP(+)-binding site is contributed by Lys148. Asn173 is a binding site for substrate. NADP(+) contacts are provided by Val174 and Lys182. Catalysis depends on Lys182, which acts as the Proton acceptor. Residues Ser184, His191, 205–208 (FEGC), Arg218, and Tyr282 each bind substrate.

This sequence belongs to the NAD(P)-dependent epimerase/dehydratase family. HldD subfamily. Homopentamer. It depends on NADP(+) as a cofactor.

The catalysed reaction is ADP-D-glycero-beta-D-manno-heptose = ADP-L-glycero-beta-D-manno-heptose. It participates in nucleotide-sugar biosynthesis; ADP-L-glycero-beta-D-manno-heptose biosynthesis; ADP-L-glycero-beta-D-manno-heptose from D-glycero-beta-D-manno-heptose 7-phosphate: step 4/4. Functionally, catalyzes the interconversion between ADP-D-glycero-beta-D-manno-heptose and ADP-L-glycero-beta-D-manno-heptose via an epimerization at carbon 6 of the heptose. The polypeptide is ADP-L-glycero-D-manno-heptose-6-epimerase (Aeromonas hydrophila subsp. hydrophila (strain ATCC 7966 / DSM 30187 / BCRC 13018 / CCUG 14551 / JCM 1027 / KCTC 2358 / NCIMB 9240 / NCTC 8049)).